The following is a 130-amino-acid chain: Small ribosomal subunit protein uS11 (130 aa).

It belongs to the universal ribosomal protein uS11 family. Part of the 30S ribosomal subunit. Interacts with proteins S7 and S18. Binds to IF-3.

Located on the platform of the 30S subunit, it bridges several disparate RNA helices of the 16S rRNA. Forms part of the Shine-Dalgarno cleft in the 70S ribosome. The sequence is that of Small ribosomal subunit protein uS11 from Psychrobacter sp. (strain PRwf-1).